Consider the following 517-residue polypeptide: ADP-ribosylation factor GTPase-activating protein 3 (517 aa).

In terms of domain architecture, Arf-GAP spans 10-126 (LTIFKRLRSV…IKALASQATR (117 aa)). The C4-type zinc finger occupies 25 to 48 (CFDCGAKNPSWASITYGVFLCIDC). The interval 139–200 (VPPSSPPPKE…EQGPSVEGLN (62 aa)) is disordered. The segment covering 159–176 (EVSSTGWASAQPEPSLTP) has biased composition (polar residues). Serine 231 is subject to Phosphoserine. The stretch at 243–263 (NEIEKQAQAVDKMNAQEDLLS) forms a coiled coil. A phosphoserine mark is found at serine 271 and serine 275. Residues 291–305 (EKMNMSGKKKAESER) show a composition bias toward basic and acidic residues. Disordered regions lie at residues 291–349 (EKMN…SDDS) and 362–422 (MELR…QKKF). Positions 312–333 (NSRSGISHSVTSDMQTIEQETP) are enriched in polar residues. The residue at position 371 (serine 371) is a Phosphoserine. Over residues 379–390 (YWKKETIKDTDP) the composition is skewed to basic and acidic residues. 6 positions are modified to phosphoserine: serine 429, serine 452, serine 454, serine 456, serine 458, and serine 459.

It localises to the cytoplasm. Its subcellular location is the golgi apparatus membrane. With respect to regulation, GAP activity stimulated by phosphatidylinositol 4,5-bisphosphate (PIP2). Functionally, GTPase-activating protein (GAP) for ADP ribosylation factor 1 (ARF1). Hydrolysis of ARF1-bound GTP may lead to dissociation of coatomer from Golgi-derived membranes to allow fusion with target membranes. This chain is ADP-ribosylation factor GTPase-activating protein 3, found in Bos taurus (Bovine).